A 537-amino-acid polypeptide reads, in one-letter code: CTP synthase (537 aa).

The tract at residues 1 to 267 is amidoligase domain; it reads MTKYIFVTGG…DQIVCDHLKL (267 aa). S13 is a CTP binding site. S13 serves as a coordination point for UTP. ATP is bound at residue 14–19; that stretch reads SIGKGI. Y54 is an L-glutamine binding site. Position 71 (D71) interacts with ATP. D71 and E141 together coordinate Mg(2+). Residues 148 to 150, 188 to 193, and K224 each bind CTP; these read DIE and KTKPTQ. UTP-binding positions include 188 to 193 and K224; that span reads KTKPTQ. 240-242 is an ATP binding site; that stretch reads RDV. Positions 292 to 535 constitute a Glutamine amidotransferase type-1 domain; sequence RIALVGKYVE…VTAAVKNKNQ (244 aa). G354 lines the L-glutamine pocket. C381 functions as the Nucleophile; for glutamine hydrolysis in the catalytic mechanism. Residues 382–385, E405, and R463 each bind L-glutamine; that span reads LGMQ. Active-site residues include H508 and E510.

Belongs to the CTP synthase family. In terms of assembly, homotetramer.

The catalysed reaction is UTP + L-glutamine + ATP + H2O = CTP + L-glutamate + ADP + phosphate + 2 H(+). It carries out the reaction L-glutamine + H2O = L-glutamate + NH4(+). It catalyses the reaction UTP + NH4(+) + ATP = CTP + ADP + phosphate + 2 H(+). It functions in the pathway pyrimidine metabolism; CTP biosynthesis via de novo pathway; CTP from UDP: step 2/2. Its activity is regulated as follows. Allosterically activated by GTP, when glutamine is the substrate; GTP has no effect on the reaction when ammonia is the substrate. The allosteric effector GTP functions by stabilizing the protein conformation that binds the tetrahedral intermediate(s) formed during glutamine hydrolysis. Inhibited by the product CTP, via allosteric rather than competitive inhibition. In terms of biological role, catalyzes the ATP-dependent amination of UTP to CTP with either L-glutamine or ammonia as the source of nitrogen. Regulates intracellular CTP levels through interactions with the four ribonucleotide triphosphates. The polypeptide is CTP synthase (Streptococcus equi subsp. zooepidemicus (strain H70)).